Reading from the N-terminus, the 215-residue chain is 3-demethoxyubiquinol 3-hydroxylase (215 aa).

Fe cation contacts are provided by E64, E94, H97, E146, E178, and H181.

The protein belongs to the COQ7 family. Fe cation is required as a cofactor.

It is found in the cell membrane. It carries out the reaction a 5-methoxy-2-methyl-3-(all-trans-polyprenyl)benzene-1,4-diol + AH2 + O2 = a 3-demethylubiquinol + A + H2O. It functions in the pathway cofactor biosynthesis; ubiquinone biosynthesis. In terms of biological role, catalyzes the hydroxylation of 2-nonaprenyl-3-methyl-6-methoxy-1,4-benzoquinol during ubiquinone biosynthesis. The polypeptide is 3-demethoxyubiquinol 3-hydroxylase (Coxiella burnetii (strain RSA 331 / Henzerling II)).